We begin with the raw amino-acid sequence, 394 residues long: Fatty acid resistance protein FarA (394 aa).

A disordered region spans residues 1-23; it reads MKSGNSEPNLMETHTDETKLQNT. A helical membrane pass occupies residues 33 to 53; that stretch reads ALTLLFALSAAAAGSAFFLWW. Positions 356–376 are disordered; the sequence is SAAGAPVSKTPGAALPEMEST.

Belongs to the membrane fusion protein (MFP) (TC 8.A.1) family. Probably part of a tripartite efflux system FarAB-MtrE, which is composed of an inner membrane transporter, FarB, a periplasmic membrane fusion protein, FarA, and an outer membrane component, MtrE.

It is found in the cell inner membrane. Functionally, mediates resistance to long-chained antibacterial fatty acids (FAs). Function is dependent on the MtrE outer membrane protein. This chain is Fatty acid resistance protein FarA, found in Neisseria gonorrhoeae.